The sequence spans 74 residues: MTTTIEQLEQKISDLECQMAFQEQTIDELNDALSQQQLLITNMQVQMKFMVGKMKTMDSSNMADASEETPPPHY.

It belongs to the SlyX family.

This is Protein SlyX homolog from Aliivibrio fischeri (strain ATCC 700601 / ES114) (Vibrio fischeri).